We begin with the raw amino-acid sequence, 297 residues long: Acetylglutamate kinase (297 aa).

Substrate-binding positions include 73-74 (GG), arginine 95, and asparagine 188.

The protein belongs to the acetylglutamate kinase family. ArgB subfamily.

The protein localises to the cytoplasm. The catalysed reaction is N-acetyl-L-glutamate + ATP = N-acetyl-L-glutamyl 5-phosphate + ADP. It functions in the pathway amino-acid biosynthesis; L-arginine biosynthesis; N(2)-acetyl-L-ornithine from L-glutamate: step 2/4. In terms of biological role, catalyzes the ATP-dependent phosphorylation of N-acetyl-L-glutamate. In Nostoc sp. (strain PCC 7120 / SAG 25.82 / UTEX 2576), this protein is Acetylglutamate kinase.